Reading from the N-terminus, the 828-residue chain is Periplasmic nitrate reductase (828 aa).

Residues 1-31 (MKLSRRSFMKANAVAAAAAAAGLSVPGVARA) constitute a signal peptide (tat-type signal). One can recognise a 4Fe-4S Mo/W bis-MGD-type domain in the interval 39–95 (IKWDKAPCRFCGTGCGVLVGTQQGRVVACQGDPDAPVNRGLNCIKGYFLPKIMYGKD). [4Fe-4S] cluster is bound by residues Cys46, Cys49, Cys53, and Cys81. Residues Lys83, Gln150, Asn175, Cys179, 212–219 (WGANMAEM), 243–247 (STYQH), 262–264 (QSD), Met372, Gln376, Asn482, 508–509 (SD), Lys531, Asp558, and 718–727 (TGRVLEHWHT) contribute to the Mo-bis(molybdopterin guanine dinucleotide) site. Phe794 lines the substrate pocket. Mo-bis(molybdopterin guanine dinucleotide) contacts are provided by Asn802 and Lys819.

The protein belongs to the prokaryotic molybdopterin-containing oxidoreductase family. NasA/NapA/NarB subfamily. As to quaternary structure, component of the periplasmic nitrate reductase NapAB complex composed of NapA and NapB. Requires [4Fe-4S] cluster as cofactor. The cofactor is Mo-bis(molybdopterin guanine dinucleotide). Predicted to be exported by the Tat system. The position of the signal peptide cleavage has not been experimentally proven.

The protein resides in the periplasm. It catalyses the reaction 2 Fe(II)-[cytochrome] + nitrate + 2 H(+) = 2 Fe(III)-[cytochrome] + nitrite + H2O. In terms of biological role, catalytic subunit of the periplasmic nitrate reductase complex NapAB. Receives electrons from NapB and catalyzes the reduction of nitrate to nitrite. The polypeptide is Periplasmic nitrate reductase (Shigella flexneri serotype 5b (strain 8401)).